Here is a 594-residue protein sequence, read N- to C-terminus: Spermidine/putrescine import ATP-binding protein PotA (594 aa).

Positions 24–435 constitute an ABC transporter domain; that stretch reads IEIKKINKTY…PANNWVANFI (412 aa). Residue 57-64 coordinates ATP; it reads GPSGCGKT. Residues 125-304 are insert; the sequence is RKPIENVSAD…EWFDKKKLTR (180 aa).

Belongs to the ABC transporter superfamily. Spermidine/putrescine importer (TC 3.A.1.11.1) family. The complex is composed of two ATP-binding proteins (PotA), two transmembrane proteins (PotB and PotC) and a solute-binding protein (PotD).

The protein localises to the cell membrane. The enzyme catalyses ATP + H2O + polyamine-[polyamine-binding protein]Side 1 = ADP + phosphate + polyamineSide 2 + [polyamine-binding protein]Side 1.. Part of the ABC transporter complex PotABCD involved in spermidine/putrescine import. Responsible for energy coupling to the transport system. This is Spermidine/putrescine import ATP-binding protein PotA from Malacoplasma penetrans (strain HF-2) (Mycoplasma penetrans).